The sequence spans 65 residues: Kassorin-M (65 aa).

The N-terminal stretch at 1–22 (MLTLKKSMLLLFFLGMVSFSLA) is a signal peptide. The propeptide occupies 23–51 (DDKREDEAEEGEDKRADEGEEKRAAEKKR). The segment at 24–45 (DKREDEAEEGEDKRADEGEEKR) is disordered. Residue L64 is modified to Leucine amide.

It belongs to the frog skin active peptide (FSAP) family. Brevinin subfamily. As to expression, expressed by the skin glands.

It localises to the secreted. Its function is as follows. Induces contraction of smooth muscle in isolated guinea pig urinary bladder (EC50=4.66 nM). Has no antimicrobial activity against the Gram-positive bacterium S.aureus, the Gram-negative bacterium E.coli and the yeast C.albicans. Elicits histamine release from rat peritoneal mast cells. In Phlyctimantis maculatus (Red-legged running frog), this protein is Kassorin-M.